The sequence spans 552 residues: ATP synthase subunit alpha (552 aa).

173–180 is an ATP binding site; sequence GDRQTGKT. The disordered stretch occupies residues 526 to 552; sequence ASPLDPSAVRKESIPVHRAPARTDDEG. A compositionally biased stretch (basic and acidic residues) spans 533–552; the sequence is AVRKESIPVHRAPARTDDEG.

This sequence belongs to the ATPase alpha/beta chains family. As to quaternary structure, F-type ATPases have 2 components, CF(1) - the catalytic core - and CF(0) - the membrane proton channel. CF(1) has five subunits: alpha(3), beta(3), gamma(1), delta(1), epsilon(1). CF(0) has three main subunits: a(1), b(2) and c(9-12). The alpha and beta chains form an alternating ring which encloses part of the gamma chain. CF(1) is attached to CF(0) by a central stalk formed by the gamma and epsilon chains, while a peripheral stalk is formed by the delta and b chains.

The protein localises to the cell membrane. It catalyses the reaction ATP + H2O + 4 H(+)(in) = ADP + phosphate + 5 H(+)(out). Its function is as follows. Produces ATP from ADP in the presence of a proton gradient across the membrane. The alpha chain is a regulatory subunit. This chain is ATP synthase subunit alpha, found in Frankia alni (strain DSM 45986 / CECT 9034 / ACN14a).